A 257-amino-acid chain; its full sequence is MGACCSSRRNRSPSLAALAEETEVVLRCLAGRVVDLPGGDEVRIAPDVGRPGQNFGYFKFPGPSRFAYVKFIGRAYALGSGRKFLLYLSRNFQVFGYEDGTGLHMLAKSLHDFLKFKGLSDRDLVVVDSVALTSQLRPLTLPIRSTSDVETLVAEEATTNYTSTENLLGQTQSSTHRPLGVPLSNVKTMGVPPTKPSSQRPRGKGGRPPARLKSIREETVSGMARAREECNSPSEHDRLTSEMTDCDSDSSVSSVFF.

The span at 163–176 shows a compositional bias: polar residues; sequence STENLLGQTQSSTH. Residues 163-257 form a disordered region; the sequence is STENLLGQTQ…SDSSVSSVFF (95 aa). Residues 214–240 are compositionally biased toward basic and acidic residues; that stretch reads SIREETVSGMARAREECNSPSEHDRLT.

The polypeptide is Gene 3 protein (Equine herpesvirus 1 (strain Ab4p) (EHV-1)).